The chain runs to 165 residues: Dihydrofolate reductase type A13 (165 aa).

Residues 7–162 enclose the DHFR domain; the sequence is RIYLVAAMGA…ITYTHSVYAR (156 aa).

Belongs to the dihydrofolate reductase family. In terms of assembly, homodimer.

The catalysed reaction is (6S)-5,6,7,8-tetrahydrofolate + NADP(+) = 7,8-dihydrofolate + NADPH + H(+). It functions in the pathway cofactor biosynthesis; tetrahydrofolate biosynthesis; 5,6,7,8-tetrahydrofolate from 7,8-dihydrofolate: step 1/1. In terms of biological role, key enzyme in folate metabolism. Catalyzes an essential reaction for de novo glycine and purine synthesis, and for DNA precursor synthesis. This Escherichia coli protein is Dihydrofolate reductase type A13 (dfrA13).